Here is a 241-residue protein sequence, read N- to C-terminus: ATP synthase subunit a (241 aa).

Transmembrane regions (helical) follow at residues 30 to 50, 91 to 111, 128 to 148, 193 to 213, and 214 to 234; these read GQVFLTSWILLGALLVFISFG, FIGTLFLFVFVSNWGGALIPW, INTTIALALLVSLSYFYAGLS, LVVGVLVFLVPLILPIPVMFL, and GLFTSAIQALIFATLAAYYIG.

This sequence belongs to the ATPase A chain family. As to quaternary structure, F-type ATPases have 2 components, CF(1) - the catalytic core - and CF(0) - the membrane proton channel. CF(1) has five subunits: alpha(3), beta(3), gamma(1), delta(1), epsilon(1). CF(0) has four main subunits: a, b, b' and c.

The protein resides in the cellular thylakoid membrane. Key component of the proton channel; it plays a direct role in the translocation of protons across the membrane. The protein is ATP synthase subunit a of Prochlorococcus marinus (strain AS9601).